The chain runs to 477 residues: Angiotensinogen (477 aa).

The first 24 residues, Met1–Gly24, serve as a signal peptide directing secretion. The cysteines at positions 42 and 161 are disulfide-linked. N-linked (GlcNAc...) asparagine glycosylation is found at Asn295 and Asn319.

This sequence belongs to the serpin family. Post-translationally, in response to low blood pressure, the enzyme renin/REN cleaves angiotensinogen to produce angiotensin-1. Angiotensin-1 is a substrate of ACE (angiotensin converting enzyme) that removes a dipeptide to yield the physiologically active peptide angiotensin-2. Angiotensin-1 and angiotensin-2 can be further processed to generate angiotensin-3, angiotensin-4. Angiotensin 1-9 is cleaved from angiotensin-1 by ACE2 and can be further processed by ACE to produce angiotensin 1-7, angiotensin 1-5 and angiotensin 1-4. Angiotensin 1-7 has also been proposed to be cleaved from angiotensin-2 by ACE2 or from angiotensin-1 by MME (neprilysin). The disulfide bond is labile. Angiotensinogen is present in the circulation in a near 40:60 ratio with the oxidized disulfide-bonded form, which preferentially interacts with receptor-bound renin.

It is found in the secreted. Functionally, essential component of the renin-angiotensin system (RAS), a potent regulator of blood pressure, body fluid and electrolyte homeostasis. Its function is as follows. Acts directly on vascular smooth muscle as a potent vasoconstrictor, affects cardiac contractility and heart rate through its action on the sympathetic nervous system, and alters renal sodium and water absorption through its ability to stimulate the zona glomerulosa cells of the adrenal cortex to synthesize and secrete aldosterone. Acts by binding to angiotensin receptors AGTR1 and AGTR2. Also binds the DEAR/FBXW7-AS1 receptor. In terms of biological role, stimulates aldosterone release. Is a ligand for the G-protein coupled receptor MAS1. Has vasodilator and antidiuretic effects. Has an antithrombotic effect that involves MAS1-mediated release of nitric oxide from platelets. This is Angiotensinogen (Agt) from Rattus norvegicus (Rat).